Here is a 197-residue protein sequence, read N- to C-terminus: Inner membrane protein RclC (197 aa).

Residues 1–15 (MEKYLHLLSRGDKIG) lie on the Periplasmic side of the membrane. The helical transmembrane segment at 16–36 (LTLIRLSIAIVFMWIGLLKFV) threads the bilayer. Residues 37–85 (PYEADSITPFVANSPLMSFFYEHPEDYKQYLTHEGEYKPEARAWQTANN) lie on the Cytoplasmic side of the membrane. A helical transmembrane segment spans residues 86–106 (TYGFSNGLGVVEVIIALLVLA). Residues 107–112 (NPVNRW) are Periplasmic-facing. Residues 113–133 (LGLLGGLMAFTTPLVTLSFLI) form a helical membrane-spanning segment. Topologically, residues 134–197 (TTPEAWVPAL…ESSSTLKTEY (64 aa)) are cytoplasmic.

The protein resides in the cell inner membrane. Functionally, probably involved in reactive chlorine species (RCS) stress resistance. The sequence is that of Inner membrane protein RclC (rclC) from Escherichia coli (strain K12).